The chain runs to 115 residues: Macrophage migration inhibitory factor homolog (115 aa).

Pro-2 (proton acceptor; via imino nitrogen) is an active-site residue. Residues Lys-33 and Ile-65 each coordinate substrate.

It belongs to the MIF family.

Its subcellular location is the secreted. It carries out the reaction L-dopachrome = 5,6-dihydroxyindole-2-carboxylate. The catalysed reaction is 3-phenylpyruvate = enol-phenylpyruvate. Its function is as follows. Tautomerization of the methyl ester of L-dopachrome. Inhibits migration of human peripheral blood mononuclear cells. This is Macrophage migration inhibitory factor homolog from Brugia malayi (Filarial nematode worm).